A 239-amino-acid polypeptide reads, in one-letter code: Mannose-P-dolichol utilization defect 1 protein homolog 1 (239 aa).

A run of 6 helical transmembrane segments spans residues 25 to 45 (CLLPLISKLLGYFLVAASMTV), 62 to 82 (LSVVAFELEVIGYTISLAYCL), 91 to 111 (FGELAFLLIQALILVACIYYF), 123 to 143 (AILYFAIAPTVFAGKIDPFLF), 174 to 194 (LSFLTCLMNFGGALARVFTSI), and 202 to 222 (MLLGIVLSIFTNGIIMSQILL). One can recognise a PQ-loop 1 domain in the interval 27 to 93 (LPLISKLLGY…KDLPFSAFGE (67 aa)). One can recognise a PQ-loop 2 domain in the interval 150 to 205 (KHLIFLSARIPQIWKNFRNKSTGQLSFLTCLMNFGGALARVFTSIQEKAPLSMLLG).

This sequence belongs to the MPDU1 (TC 2.A.43.3) family.

It is found in the membrane. The protein is Mannose-P-dolichol utilization defect 1 protein homolog 1 of Arabidopsis thaliana (Mouse-ear cress).